The following is a 289-amino-acid chain: Agroclavine dehydrogenase (289 aa).

This sequence belongs to the fgaFS/easG family. In terms of assembly, monomer.

The catalysed reaction is agroclavine + NADP(+) = didehydroagroclavine + NADPH + H(+). The protein operates within alkaloid biosynthesis; ergot alkaloid biosynthesis. In terms of biological role, agroclavine dehydrogenase; part of the gene cluster that mediates the biosynthesis of fungal ergot alkaloid ergovaline, the predominant ergopeptine product in E.festucae var. lolii. DmaW catalyzes the first step of ergot alkaloid biosynthesis by condensing dimethylallyl diphosphate (DMAP) and tryptophan to form 4-dimethylallyl-L-tryptophan. The second step is catalyzed by the methyltransferase easF that methylates 4-dimethylallyl-L-tryptophan in the presence of S-adenosyl-L-methionine, resulting in the formation of 4-dimethylallyl-L-abrine. The catalase easC and the FAD-dependent oxidoreductase easE then transform 4-dimethylallyl-L-abrine to chanoclavine-I which is further oxidized by easD in the presence of NAD(+), resulting in the formation of chanoclavine-I aldehyde. Agroclavine dehydrogenase easG then mediates the conversion of chanoclavine-I aldehyde to agroclavine via a non-enzymatic adduct reaction: the substrate is an iminium intermediate that is formed spontaneously from chanoclavine-I aldehyde in the presence of glutathione. Further conversion of agroclavine to paspalic acid is a two-step process involving oxidation of agroclavine to elymoclavine and of elymoclavine to paspalic acid, the second step being performed by the elymoclavine oxidase cloA. However, cloA does not encode a functional enzyme indicating that C.fusiformis terminates its ergot alkaloid pathway at elymoclavine. The protein is Agroclavine dehydrogenase of Claviceps fusiformis (Ergot fungus).